The sequence spans 346 residues: Outer membrane protein A (346 aa).

Residues 1–21 (MKKTAIAIAVALAGFATVAQA) form the signal peptide. Transmembrane regions (beta stranded) follow at residues 27-37 (TWYTGAKLGWS), 55-66 (QLGAGAFGGYQV), 70-78 (VGFEMGYDW), 96-107 (QGVQLTAKLGYP), 112-120 (LDIYTRLGG), 142-151 (PVFAGGVEYA), 156-163 (IATRLEYQ), and 182-190 (MLSLGVSYR). The hinge-like stretch occupies residues 197 to 208 (APVVAPAPAPAP). 4 tandem repeats follow at residues 201–202 (AP), 203–204 (AP), 205–206 (AP), and 207–208 (AP). The segment at 201 to 208 (APAPAPAP) is 4 X 2 AA tandem repeats of A-P. One can recognise an OmpA-like domain in the interval 210–338 (VQTKHFTLKS…RVEIEVKGIK (129 aa)). A disulfide bridge connects residues C311 and C323.

The protein belongs to the outer membrane OOP (TC 1.B.6) superfamily. OmpA family. Monomer and homodimer.

Its subcellular location is the cell outer membrane. With TolR probably plays a role in maintaining the position of the peptidoglycan cell wall in the periplasm. Acts as a porin with low permeability that allows slow penetration of small solutes; an internal gate slows down solute passage. Functionally, required for conjugation with F-type plasmids; probably serves as the mating receptor on recipient cells. The protein is Outer membrane protein A of Escherichia coli O157:H7.